Reading from the N-terminus, the 250-residue chain is Pre-protein VI (250 aa).

A propeptide spanning residues 1–33 (MEDINFASLAPRHGSRPFMGNWQDIGTSNMSGG) is cleaved from the precursor. The tract at residues 34 to 54 (AFSWGSLWSGIKNFGSTIKNY) is amphipathic alpha-helix essential for membrane lytic activity. The interval 36–53 (SWGSLWSGIKNFGSTIKN) is involved in endosomal membrane lysis. Residues 48-74 (GSTIKNYGSKAWNSSTGQMLRDKLKEQ) are interaction with hexon protein. The short motif at 67-76 (LRDKLKEQNF) is the Nuclear export signal element. Residues 103 to 147 (INSKLDPRPPVEEPPPAVETVSPEGRGEKRPRPDREETLVTQIDE) form a disordered region. A Phosphoserine; by host modification is found at Ser-124. A compositionally biased stretch (basic and acidic residues) spans 127–140 (GRGEKRPRPDREET). The Nuclear localization signal motif lies at 131-135 (KRPRP). Thr-143 is subject to Phosphothreonine; by host. The PPXY motif motif lies at 148–151 (PPSY). The span at 206–220 (PSRASLRRAASGPRS) shows a compositional bias: low complexity. The tract at residues 206-226 (PSRASLRRAASGPRSMRPVAS) is disordered. Residues 231-242 (STLNSIVGLGVQ) carry the Nuclear export signal motif. The interval 233-239 (LNSIVGL) is interaction with hexon protein. The segment at 240–250 (GVQSLKRRRCF) is binds to importin alpha/beta, involved in hexon nuclear import. A Nuclear localization signal motif is present at residues 245–248 (KRRR).

Belongs to the adenoviridae protein VI family. Interacts with hexon protein; this interaction allows nuclear import of hexon trimers and possibly pre-capsid assembly. Interacts (via C-terminal NLS) with importin alpha/beta. As to quaternary structure, interacts (via PPxY motif) with host NEDD4 ubiquitine ligase; this interaction might play a role in virus intracellular transport during entry. Part of a complex composed of the core-capsid bridging protein, the endosome lysis protein VI and the hexon-linking protein VIII; these interactions bridge the virus core to the capsid. Interacts with peripentonal hexons; this interaction stabilizes the capsid by gluing two peripentonal hexons together and joining them with an adjacent group-of-nine hexon. In terms of assembly, heterodimer with the viral protease; disulfide-linked. Interacts with the viral protease. Post-translationally, ubiquitinated by Nedd4 following partial capsid disassembly; which might play a role in intracellular virus movement during entry. Contains the major nuclear import and export signals. Proteolytically removed during virion maturation. The processing of the C-terminus turns the precursor into a mature viral structural protein and abrogates its ability to promote hexon import and act as a potential chaperone protein.

It is found in the host nucleus. It localises to the host cytoplasm. The protein resides in the virion. Its function is as follows. During virus assembly, promotes hexon trimers nuclear import through nuclear pore complexes via an importin alpha/beta-dependent mechanism. By analogy to herpesviruses capsid assembly, might act as a chaperone to promote the formation of the icosahedral capsid. Functionally, structural component of the virion that provides increased stability to the particle shell through its interaction with the core-capsid bridging protein and the hexon-linking protein VIII. Fibers shedding during virus entry into host cell allows the endosome lysis protein to be exposed as a membrane-lytic peptide. Exhibits pH-independent membrane fragmentation activity and probably mediates viral rapid escape from host endosome via organellar membrane lysis. It is not clear if it then remains partially associated with the capsid and involved in the intracellular microtubule-dependent transport of capsid to the nucleus, or if it is lost during endosomal penetration. In terms of biological role, cofactor that activates the viral protease. Binds to viral protease in a 1:1 ratio. This Human adenovirus C serotype 2 (HAdV-2) protein is Pre-protein VI.